The primary structure comprises 292 residues: (S)-phenoxypropionate/alpha-ketoglutarate-dioxygenase (292 aa).

Fe cation is bound by residues histidine 108 and aspartate 110. Positions 135 and 247 each coordinate 2-oxoglutarate. A Fe cation-binding site is contributed by histidine 262. 2-oxoglutarate is bound at residue arginine 273.

This sequence belongs to the TfdA dioxygenase family. In terms of assembly, monomer. Fe cation is required as a cofactor. Requires L-ascorbate as cofactor.

The catalysed reaction is (S)-2-(4-chloro-2-methylphenoxy)propanoate + 2-oxoglutarate + O2 = 2-methyl-4-chlorophenol + pyruvate + succinate + CO2. The enzyme catalyses (S)-(2,4-dichlorophenoxy)propanoate + 2-oxoglutarate + O2 = 2,4-dichlorophenol + pyruvate + succinate + CO2. It participates in xenobiotic degradation; 2-(2,4-dichlorophenoxy)propanoate degradation. Its activity is regulated as follows. Inhibited by divalent cations, most significantly by copper and nickel, and by diethylpyrocarbonate (DEPC). In terms of biological role, involved in the degradation of the phenoxypropionate herbicides. Catalyzes the enantiospecific cleavage of the ether bond in the herbicid S-dichlorprop ((S)-2-(2,4-dichlorophenoxy)propionate)(S-2,4-DP) and S-mecoprop ((S)-2-(4-chloro-2-methylphenoxy)propionate)(S-2,4-MCPP). It can also accept (RS)-2-(4-chlorophenoxy)propionate, (RS)-2-(m-chlorophenoxy)propionate and phenoxyacetate derivatives such as 2,4-dichlorophenoxyacetate (2,4-D), however it can only accept 2-oxoglutarate as oxygen acceptor. This chain is (S)-phenoxypropionate/alpha-ketoglutarate-dioxygenase, found in Delftia acidovorans (Pseudomonas acidovorans).